A 188-amino-acid chain; its full sequence is Ubiquitin-like protein 4B (188 aa).

The region spanning 1-76 (MFLTVKLLLG…INVIMRPPED (76 aa)) is the Ubiquitin-like domain. Residues 146–188 (EEKEAPAVASELEQNNGGGGGGGGTGGEGGGKKEEEEGEEADQ) are disordered. Gly residues predominate over residues 161–174 (NGGGGGGGGTGGEG).

In terms of tissue distribution, expressed specifically in post-meiotic male germ cells of the testis. Abundantly expressed in stage 14-16 spermatids.

It localises to the cytoplasm. In Mus musculus (Mouse), this protein is Ubiquitin-like protein 4B (Ubl4b).